Consider the following 331-residue polypeptide: Aldo-keto reductase family 7 member A3 (331 aa).

Ser6 is subject to Phosphoserine. 3 residues coordinate NADPH: Met17, Asp44, and Tyr49. Tyr49 functions as the Proton donor in the catalytic mechanism. Ser85 carries the post-translational modification Phosphoserine. Residues His113, Ser143, Asn144, Asn198, Leu200, Gly202, Lys208, Tyr209, and Arg222 each coordinate NADPH. Residue Thr227 is modified to Phosphothreonine. 3 residues coordinate NADPH: Ser290, Gln294, and Asn298.

This sequence belongs to the aldo/keto reductase family. Aldo/keto reductase 2 subfamily. Homodimer. Expressed in colon, kidney, liver, pancreas, adenocarcinoma and endometrium.

Its subcellular location is the cytoplasm. It carries out the reaction a primary alcohol + NADP(+) = an aldehyde + NADPH + H(+). The catalysed reaction is aflatoxin B1 dialdehyde + NADPH + H(+) = aflatoxin B1 C(6a)-monoaldehyde + NADP(+). The enzyme catalyses aflatoxin B1 dialdehyde + NADPH + H(+) = aflatoxin B1 C(8)-monoaldehyde + NADP(+). It catalyses the reaction aflatoxin B1 C(6a)-monoaldehyde + NADPH + 2 H(+) = aflatoxin B1 triol + NADP(+). Inhibited by citrate. Its function is as follows. Catalyzes the NADPH-dependent reduction of various carbonyl-containing compounds, including aldehydes, ketones, and toxic products from cellular metabolism or environmental exposure. Can reduce the dialdehyde form of aflatoxin B1 (AFB1) into alcohol derivatives, via monoaldehydes intermediates. Can reduce the dialdehyde form of aflatoxin B1 (AFB1) into alcohol derivatives, via monoaldehydes intermediates, thus preventing the formation of protein adducts that contribute to AFB1-induced toxicity. This chain is Aldo-keto reductase family 7 member A3, found in Homo sapiens (Human).